The sequence spans 546 residues: Probable Dol-P-Man:Man(7)GlcNAc(2)-PP-Dol alpha-1,6-mannosyltransferase (546 aa).

The next 9 helical transmembrane spans lie at 5–25 (ESIC…YYSY), 67–87 (FIPS…VNPL), 113–133 (FGTL…HLVY), 166–186 (ILVF…MCLI), 200–220 (LLLV…LIDS), 258–278 (LPWL…FVYI), 283–303 (LLIY…HKEW), 305–325 (FIIY…SLCF), and 340–360 (LMFF…LYVF).

This sequence belongs to the glycosyltransferase 22 family.

The protein resides in the endoplasmic reticulum membrane. It catalyses the reaction an alpha-D-Man-(1-&gt;2)-alpha-D-Man-(1-&gt;2)-alpha-D-Man-(1-&gt;3)-[alpha-D-Man-(1-&gt;2)-alpha-D-Man-(1-&gt;3)-alpha-D-Man-(1-&gt;6)]-beta-D-Man-(1-&gt;4)-beta-D-GlcNAc-(1-&gt;4)-alpha-D-GlcNAc-diphospho-di-trans,poly-cis-dolichol + a di-trans,poly-cis-dolichyl beta-D-mannosyl phosphate = an alpha-D-Man-(1-&gt;2)-alpha-D-Man-(1-&gt;2)-alpha-D-Man-(1-&gt;3)-[alpha-D-Man-(1-&gt;2)-alpha-D-Man-(1-&gt;3)-[alpha-D-Man-(1-&gt;6)]-alpha-D-Man-(1-&gt;6)]-beta-D-Man-(1-&gt;4)-beta-D-GlcNAc-(1-&gt;4)-alpha-D-GlcNAc-diphospho-di-trans,poly-cis-dolichol + a di-trans,poly-cis-dolichyl phosphate + H(+). The protein operates within protein modification; protein glycosylation. Functionally, mannosyltransferase that operates in the biosynthetic pathway of dolichol-linked oligosaccharides, the glycan precursors employed in protein asparagine (N)-glycosylation. The assembly of dolichol-linked oligosaccharides begins on the cytosolic side of the endoplasmic reticulum membrane and finishes in its lumen. The sequential addition of sugars to dolichol pyrophosphate produces dolichol-linked oligosaccharides containing fourteen sugars, including two GlcNAcs, nine mannoses and three glucoses. Once assembled, the oligosaccharide is transferred from the lipid to nascent proteins by oligosaccharyltransferases. In the lumen of the endoplasmic reticulum, adds the eighth mannose residue in an alpha-1,6 linkage onto Man(7)GlcNAc(2)-PP-dolichol to produce Man(8)GlcNAc(2)-PP-dolichol. The polypeptide is Probable Dol-P-Man:Man(7)GlcNAc(2)-PP-Dol alpha-1,6-mannosyltransferase (alg12) (Schizosaccharomyces pombe (strain 972 / ATCC 24843) (Fission yeast)).